The following is a 486-amino-acid chain: Mogroside I-E synthase (486 aa).

Residues Ser-302, Cys-360, Gln-362, Trp-380, Asn-381, Ser-382, Glu-385, Asp-401, and Gln-402 each contribute to the UDP-alpha-D-glucose site.

The protein belongs to the UDP-glycosyltransferase family. Highly expressed in young fruits 15 days after anthesis (15-DAA).

It carries out the reaction mogrol + UDP-alpha-D-glucose = mogroside IE + UDP + H(+). The enzyme catalyses mogroside I-A1 + UDP-alpha-D-glucose = mogroside IIE + UDP + H(+). The catalysed reaction is mogroside II-A1 + UDP-alpha-D-glucose = mogroside IIIX + UDP + H(+). It catalyses the reaction mogroside II-A + UDP-alpha-D-glucose = mogroside III + UDP + H(+). It functions in the pathway secondary metabolite biosynthesis; terpenoid biosynthesis. UDP-glycosyltransferase involved in the biosynthesis of cucurbitacin and mogroside tetracyclic triterpene natural products (e.g. siamenoside I and mogrosides IV, V and VI). Cucurbitacins have cytotoxic properties and exhibit deterrent taste as a defense barrier against herbivores. Mogrosides are nonsugar highly oxygenated compounds used as high-intensity zero-calorie sweeteners; they also possess pharmacological properties such as regulating immunity, lowering blood sugar and lipid levels, protecting the liver, and acting as antioxidants and antitumor agents. Catalyzes the C3 primary glucosylation of mogrol, mogroside I-A1, mogroside II-A1 and mogroside II-A. This Siraitia grosvenorii (Monk's fruit) protein is Mogroside I-E synthase.